The sequence spans 138 residues: ATP synthase epsilon chain (138 aa).

This sequence belongs to the ATPase epsilon chain family. In terms of assembly, F-type ATPases have 2 components, CF(1) - the catalytic core - and CF(0) - the membrane proton channel. CF(1) has five subunits: alpha(3), beta(3), gamma(1), delta(1), epsilon(1). CF(0) has three main subunits: a, b and c.

It localises to the cell membrane. Produces ATP from ADP in the presence of a proton gradient across the membrane. The polypeptide is ATP synthase epsilon chain (Streptococcus equi subsp. zooepidemicus (strain H70)).